A 283-amino-acid polypeptide reads, in one-letter code: MAGNFWQSSHYLQWILDKQDLLKERQKDLKFLSEEEYWKLQIFFTNVIQALGEHLKLRQQVIATATVYFKRFYARYSLKSIDPVLMAPTCVFLASKVEEFGVVSNTRLISAATSVLKTRFSYAFPKEFPYRMNHILECEFYLLELMDCCLIVYHPYRPLLQYVQDMGQEDMLLPLAWRIVNDTYRTDLCLLYPPFMIALACLHVACVVQQKDARQWFAELSVDMEKILEIIRVILKLYEQWKNFDERKEMATILNKMPKPKPPPNSEGEQGTNGSQSSGYSQS.

A Cyclin N-terminal domain is found at 46–144 (NVIQALGEHL…ILECEFYLLE (99 aa)). Residues 252-283 (TILNKMPKPKPPPNSEGEQGTNGSQSSGYSQS) are disordered. The segment covering 267-283 (EGEQGTNGSQSSGYSQS) has biased composition (polar residues).

This sequence belongs to the cyclin family. Cyclin C subfamily. In terms of assembly, component of the Mediator complex. The cylin/CDK pair formed by ccnc/cdk8 also associates with the large subunit of RNA polymerase II.

It localises to the nucleus. In terms of biological role, component of the Mediator complex, a coactivator involved in regulated gene transcription of nearly all RNA polymerase II-dependent genes. Mediator functions as a bridge to convey information from gene-specific regulatory proteins to the basal RNA polymerase II transcription machinery. Mediator is recruited to promoters by direct interactions with regulatory proteins and serves as a scaffold for the assembly of a functional preinitiation complex with RNA polymerase II and the general transcription factors. Binds to and activates cyclin-dependent kinase cdk8 that phosphorylates the CTD (C-terminal domain) of the large subunit of RNA polymerase II (RNAp II), which may inhibit the formation of a transcription initiation complex. This is Cyclin-C (ccnc) from Xenopus tropicalis (Western clawed frog).